A 306-amino-acid polypeptide reads, in one-letter code: Acetyl-coenzyme A carboxylase carboxyl transferase subunit beta (306 aa).

Positions valine 25–arginine 294 constitute a CoA carboxyltransferase N-terminal domain. 4 residues coordinate Zn(2+): cysteine 29, cysteine 32, cysteine 48, and cysteine 51. The C4-type zinc-finger motif lies at cysteine 29 to cysteine 51. Residues asparagine 281–valine 306 are disordered. Positions leucine 289 to valine 306 are enriched in basic and acidic residues.

The protein belongs to the AccD/PCCB family. As to quaternary structure, acetyl-CoA carboxylase is a heterohexamer composed of biotin carboxyl carrier protein (AccB), biotin carboxylase (AccC) and two subunits each of ACCase subunit alpha (AccA) and ACCase subunit beta (AccD). It depends on Zn(2+) as a cofactor.

The protein resides in the cytoplasm. The enzyme catalyses N(6)-carboxybiotinyl-L-lysyl-[protein] + acetyl-CoA = N(6)-biotinyl-L-lysyl-[protein] + malonyl-CoA. It participates in lipid metabolism; malonyl-CoA biosynthesis; malonyl-CoA from acetyl-CoA: step 1/1. Functionally, component of the acetyl coenzyme A carboxylase (ACC) complex. Biotin carboxylase (BC) catalyzes the carboxylation of biotin on its carrier protein (BCCP) and then the CO(2) group is transferred by the transcarboxylase to acetyl-CoA to form malonyl-CoA. The polypeptide is Acetyl-coenzyme A carboxylase carboxyl transferase subunit beta (Sodalis glossinidius (strain morsitans)).